The primary structure comprises 1761 residues: Laminin subunit beta-4 (1761 aa).

A signal peptide spans 1–19 (MQFQLTLFLHLGWLSYSKA). The Laminin N-terminal domain maps to 24–264 (NRGACHPTTG…ALYEMIVRGS (241 aa)). Residues Asn-169, Asn-229, and Asn-246 are each glycosylated (N-linked (GlcNAc...) asparagine). 19 cysteine pairs are disulfide-bonded: Cys-265–Cys-274, Cys-267–Cys-295, Cys-297–Cys-306, Cys-309–Cys-329, Cys-332–Cys-341, Cys-334–Cys-359, Cys-362–Cys-371, Cys-374–Cys-392, Cys-395–Cys-408, Cys-397–Cys-423, Cys-425–Cys-434, Cys-437–Cys-452, Cys-455–Cys-468, Cys-457–Cys-475, Cys-477–Cys-486, Cys-489–Cys-503, Cys-506–Cys-518, Cys-508–Cys-525, and Cys-527–Cys-536. 4 consecutive Laminin EGF-like domains span residues 265–331 (CFCN…ACRS), 332–394 (CSCN…ACIP), 395–454 (CECD…GCQP), and 455–505 (CDCN…GCSP). The Laminin EGF-like 5; truncated domain maps to 506–552 (CDCDIGGAYSNVCSPKNGQCECRPHVTGRSCSEPAPGYFFAPLNFYL). Residues 545-763 (FAPLNFYLYE…LIISMSAKLH (219 aa)) enclose the Laminin IV type B domain. Disulfide bonds link Cys-769/Cys-781, Cys-771/Cys-788, Cys-790/Cys-799, Cys-802/Cys-814, Cys-817/Cys-829, Cys-819/Cys-836, Cys-838/Cys-847, Cys-850/Cys-860, Cys-863/Cys-872, Cys-865/Cys-879, Cys-882/Cys-891, Cys-894/Cys-908, Cys-913/Cys-938, Cys-940/Cys-949, Cys-952/Cys-967, Cys-970/Cys-984, Cys-972/Cys-991, Cys-994/Cys-1003, Cys-1006/Cys-1019, Cys-1022/Cys-1043, Cys-1024/Cys-1050, Cys-1052/Cys-1061, Cys-1064/Cys-1077, Cys-1080/Cys-1092, Cys-1082/Cys-1099, Cys-1101/Cys-1110, Cys-1113/Cys-1125, Cys-1128/Cys-1140, Cys-1130/Cys-1147, Cys-1149/Cys-1158, and Cys-1161/Cys-1172. 8 consecutive Laminin EGF-like domains span residues 769–816 (CKCH…GCHP), 817–862 (CHCH…SCHP), 863–910 (CPCN…PCRP), 911–969 (CLCP…PCQP), 970–1021 (CACN…TCRR), 1022–1079 (CSCH…GCQS), 1080–1127 (CDCD…RCIP), and 1128–1174 (CDCN…TCLQ). Residue Asn-1016 is glycosylated (N-linked (GlcNAc...) asparagine). N-linked (GlcNAc...) asparagine glycosylation is present at Asn-1055. The interval 1175 to 1375 (CHLCFDQWDH…PDIQILNEKV (201 aa)) is domain II. N-linked (GlcNAc...) asparagine glycans are attached at residues Asn-1223, Asn-1301, Asn-1326, Asn-1333, and Asn-1354. Residues 1243–1301 (KVKDYHDSVRRQIMQLNEQLKAVYEFQDLKDTIERAKNEADLLLEDLQEEIDLQSSVLN) adopt a coiled-coil conformation. Residues 1376-1408 (CGDPGNVPCVPLPCGGALCTGRKGHRKCRGPGC) are domain alpha. Residues 1409–1761 (HGSLTLSTNA…QEKKYARCYS (353 aa)) are domain I. Positions 1416–1480 (TNALQKAQEA…SDSEEENINL (65 aa)) form a coiled coil. Residues Asn-1469, Asn-1517, Asn-1587, Asn-1596, Asn-1609, and Asn-1725 are each glycosylated (N-linked (GlcNAc...) asparagine). A coiled-coil region spans residues 1525–1759 (IQKHMQLCED…VEQEKKYARC (235 aa)).

In terms of assembly, laminin is a complex glycoprotein, consisting of three different polypeptide chains (alpha, beta, gamma), which are bound to each other by disulfide bonds into a cross-shaped molecule comprising one long and three short arms with globules at each end.

Its subcellular location is the secreted. The protein localises to the extracellular space. It localises to the extracellular matrix. It is found in the basement membrane. Functionally, binding to cells via a high affinity receptor, laminin is thought to mediate the attachment, migration and organization of cells into tissues during embryonic development by interacting with other extracellular matrix components. The polypeptide is Laminin subunit beta-4 (LAMB4) (Homo sapiens (Human)).